A 438-amino-acid polypeptide reads, in one-letter code: 23S rRNA (uracil(1939)-C(5))-methyltransferase RlmD (438 aa).

Positions 4 to 68 (FYTPGRRTAT…RHFARGRVTR (65 aa)) constitute a TRAM domain. The [4Fe-4S] cluster site is built by Cys81, Cys87, Cys90, and Cys167. Positions 269, 298, 303, 319, 346, and 367 each coordinate S-adenosyl-L-methionine. Cys393 serves as the catalytic Nucleophile.

Belongs to the class I-like SAM-binding methyltransferase superfamily. RNA M5U methyltransferase family. RlmD subfamily.

It carries out the reaction uridine(1939) in 23S rRNA + S-adenosyl-L-methionine = 5-methyluridine(1939) in 23S rRNA + S-adenosyl-L-homocysteine + H(+). Its function is as follows. Catalyzes the formation of 5-methyl-uridine at position 1939 (m5U1939) in 23S rRNA. This is 23S rRNA (uracil(1939)-C(5))-methyltransferase RlmD from Edwardsiella ictaluri (strain 93-146).